Consider the following 172-residue polypeptide: 3-hydroxydecanoyl-[acyl-carrier-protein] dehydratase (172 aa).

The active site involves histidine 71.

It belongs to the thioester dehydratase family. FabA subfamily. Homodimer.

Its subcellular location is the cytoplasm. The enzyme catalyses a (3R)-hydroxyacyl-[ACP] = a (2E)-enoyl-[ACP] + H2O. It carries out the reaction (3R)-hydroxydecanoyl-[ACP] = (2E)-decenoyl-[ACP] + H2O. The catalysed reaction is (2E)-decenoyl-[ACP] = (3Z)-decenoyl-[ACP]. It functions in the pathway lipid metabolism; fatty acid biosynthesis. In terms of biological role, necessary for the introduction of cis unsaturation into fatty acids. Catalyzes the dehydration of (3R)-3-hydroxydecanoyl-ACP to E-(2)-decenoyl-ACP and then its isomerization to Z-(3)-decenoyl-ACP. Can catalyze the dehydratase reaction for beta-hydroxyacyl-ACPs with saturated chain lengths up to 16:0, being most active on intermediate chain length. This chain is 3-hydroxydecanoyl-[acyl-carrier-protein] dehydratase, found in Yersinia enterocolitica serotype O:8 / biotype 1B (strain NCTC 13174 / 8081).